A 313-amino-acid chain; its full sequence is Mitochondrial uncoupling protein 5 (313 aa).

3 Solcar repeats span residues 4-108 (KGFA…IKGE), 117-208 (MPLM…VKET), and 217-307 (DGLG…VKKL). 6 consecutive transmembrane segments (helical) span residues 6 to 26 (FAEG…LDLI), 77 to 97 (MRAL…YSTT), 123 to 143 (IGAG…ADVA), 182 to 202 (RGSS…LASY), 223 to 243 (VSAS…VDVI), and 280 to 300 (YKGF…LFVT).

This sequence belongs to the mitochondrial carrier (TC 2.A.29) family. As to expression, expressed in roots, leaves, stems and flowers.

It is found in the mitochondrion inner membrane. In terms of biological role, PUMPS are mitochondrial transporter proteins that create proton leaks across the inner mitochondrial membrane, thus uncoupling oxidative phosphorylation. This leads to a decrease in the efficiency of oxidative phosphorylation and an increase in heat production. May be involved in protecting plant cells against oxidative stress damage. Recombinant PUMP5, reconstituted into liposomes, transports a wide range of dicarboxylic acids including malate, oxaloacetate and succinate as well as phosphate, sulfate and thiosulfate. However, it is unknown if these transports are of any biological significance in vivo. The protein is Mitochondrial uncoupling protein 5 (PUMP5) of Arabidopsis thaliana (Mouse-ear cress).